A 156-amino-acid chain; its full sequence is Transcriptional repressor NrdR (156 aa).

Residues C3–C34 fold into a zinc finger. In terms of domain architecture, ATP-cone spans V49–Q139.

It belongs to the NrdR family. Zn(2+) is required as a cofactor.

Functionally, negatively regulates transcription of bacterial ribonucleotide reductase nrd genes and operons by binding to NrdR-boxes. This chain is Transcriptional repressor NrdR, found in Thermotoga neapolitana (strain ATCC 49049 / DSM 4359 / NBRC 107923 / NS-E).